Reading from the N-terminus, the 458-residue chain is Exodeoxyribonuclease 7 large subunit (458 aa).

It belongs to the XseA family. As to quaternary structure, heterooligomer composed of large and small subunits.

The protein resides in the cytoplasm. It catalyses the reaction Exonucleolytic cleavage in either 5'- to 3'- or 3'- to 5'-direction to yield nucleoside 5'-phosphates.. In terms of biological role, bidirectionally degrades single-stranded DNA into large acid-insoluble oligonucleotides, which are then degraded further into small acid-soluble oligonucleotides. The sequence is that of Exodeoxyribonuclease 7 large subunit from Halalkalibacterium halodurans (strain ATCC BAA-125 / DSM 18197 / FERM 7344 / JCM 9153 / C-125) (Bacillus halodurans).